The following is a 299-amino-acid chain: Apolipoprotein E (299 aa).

An N-terminal signal peptide occupies residues 1–18; it reads MKVLCTVLVVTLLAGCRA. 7 repeat units span residues 74 to 95, 96 to 117, 118 to 139, 140 to 161, 162 to 183, 184 to 205, and 224 to 245. Residues 74 to 245 are 8 X 22 AA approximate tandem repeats; it reads VLMEDTMKAV…RLEEMREQME (172 aa). Residue M137 is modified to Methionine sulfoxide. A Phosphoserine modification is found at S141. Positions 152 to 162 are LDL and other lipoprotein receptors binding; that stretch reads HLRKLRKRMLR. Heparin is bound at residue 156–159; sequence LRKR. The lipid-binding and lipoprotein association stretch occupies residues 204–273; that stretch reads AALTGQPLQE…GWFEPMVEDM (70 aa). Position 219 to 226 (219 to 226) interacts with heparin; it reads GKQLRGRL. The tract at residues 261–273 is specificity for association with VLDL; it reads RLKGWFEPMVEDM.

It belongs to the apolipoprotein A1/A4/E family. In terms of assembly, homotetramer. May interact with ABCA1; functionally associated with ABCA1 in the biogenesis of HDLs. May interact with APP/A4 amyloid-beta peptide; the interaction is extremely stable in vitro but its physiological significance is unclear. May interact with MAPT. May interact with MAP2. In the cerebrospinal fluid, interacts with secreted SORL1. Interacts with PMEL; this allows the loading of PMEL luminal fragment on ILVs to induce fibril nucleation. In terms of processing, APOE exists as multiple glycosylated and sialylated glycoforms within cells and in plasma. The extent of glycosylation and sialylation are tissue and context specific. Glycated in plasma VLDL. Post-translationally, phosphorylated by FAM20C in the extracellular medium.

It is found in the secreted. Its subcellular location is the extracellular space. The protein resides in the extracellular matrix. The protein localises to the extracellular vesicle. It localises to the endosome. It is found in the multivesicular body. Functionally, APOE is an apolipoprotein, a protein associating with lipid particles, that mainly functions in lipoprotein-mediated lipid transport between organs via the plasma and interstitial fluids. APOE is a core component of plasma lipoproteins and is involved in their production, conversion and clearance. Apolipoproteins are amphipathic molecules that interact both with lipids of the lipoprotein particle core and the aqueous environment of the plasma. As such, APOE associates with chylomicrons, chylomicron remnants, very low density lipoproteins (VLDL) and intermediate density lipoproteins (IDL) but shows a preferential binding to high-density lipoproteins (HDL). It also binds a wide range of cellular receptors including the LDL receptor/LDLR, the LDL receptor-related proteins LRP1, LRP2 and LRP8 and the very low-density lipoprotein receptor/VLDLR that mediate the cellular uptake of the APOE-containing lipoprotein particles. Finally, APOE also has a heparin-binding activity and binds heparan-sulfate proteoglycans on the surface of cells, a property that supports the capture and the receptor-mediated uptake of APOE-containing lipoproteins by cells. A main function of APOE is to mediate lipoprotein clearance through the uptake of chylomicrons, VLDLs, and HDLs by hepatocytes. APOE is also involved in the biosynthesis by the liver of VLDLs as well as their uptake by peripheral tissues ensuring the delivery of triglycerides and energy storage in muscle, heart and adipose tissues. By participating in the lipoprotein-mediated distribution of lipids among tissues, APOE plays a critical role in plasma and tissues lipid homeostasis. APOE is also involved in two steps of reverse cholesterol transport, the HDLs-mediated transport of cholesterol from peripheral tissues to the liver, and thereby plays an important role in cholesterol homeostasis. First, it is functionally associated with ABCA1 in the biogenesis of HDLs in tissues. Second, it is enriched in circulating HDLs and mediates their uptake by hepatocytes. APOE also plays an important role in lipid transport in the central nervous system, regulating neuron survival and sprouting. This Octodon degus (Degu) protein is Apolipoprotein E (APOE).